The following is a 162-amino-acid chain: Larval cuticle protein F1 (162 aa).

A run of 4 repeats spans residues 27 to 30 (AAPV), 43 to 46 (AAPV), 59 to 62 (AAPV), and 75 to 78 (AAPA).

In terms of biological role, component of the larval cuticle. This chain is Larval cuticle protein F1, found in Tenebrio molitor (Yellow mealworm beetle).